The sequence spans 100 residues: Aspartyl/glutamyl-tRNA(Asn/Gln) amidotransferase subunit C (100 aa).

The protein belongs to the GatC family. Heterotrimer of A, B and C subunits.

The enzyme catalyses L-glutamyl-tRNA(Gln) + L-glutamine + ATP + H2O = L-glutaminyl-tRNA(Gln) + L-glutamate + ADP + phosphate + H(+). It carries out the reaction L-aspartyl-tRNA(Asn) + L-glutamine + ATP + H2O = L-asparaginyl-tRNA(Asn) + L-glutamate + ADP + phosphate + 2 H(+). In terms of biological role, allows the formation of correctly charged Asn-tRNA(Asn) or Gln-tRNA(Gln) through the transamidation of misacylated Asp-tRNA(Asn) or Glu-tRNA(Gln) in organisms which lack either or both of asparaginyl-tRNA or glutaminyl-tRNA synthetases. The reaction takes place in the presence of glutamine and ATP through an activated phospho-Asp-tRNA(Asn) or phospho-Glu-tRNA(Gln). The polypeptide is Aspartyl/glutamyl-tRNA(Asn/Gln) amidotransferase subunit C (Rickettsia africae (strain ESF-5)).